Reading from the N-terminus, the 543-residue chain is Intermediate filament protein ifb-2 (543 aa).

The span at 1–10 (MSAVSYSMHR) shows a compositional bias: polar residues. A disordered region spans residues 1 to 27 (MSAVSYSMHRTTTTTSSSSHGGVSAGH). The tract at residues 1 to 42 (MSAVSYSMHRTTTTTSSSSHGGVSAGHAAEEFVASAEREKQE) is head. The IF rod domain occupies 39–388 (EKQEMQQLNS…KLVESEEGRF (350 aa)). The tract at residues 43 to 74 (MQQLNSRLEVYISRVRQLEDRNKELVIELDTL) is coil 1A. A linker 1 region spans residues 75 to 88 (RGSLGNDIGQIKFK). The interval 89–223 (FNDSLVKVRR…RIHSQEITEL (135 aa)) is coil 1B. The tract at residues 224 to 240 (RTLLAQAPADTREFFKN) is linker 12. The tract at residues 241–387 (ELALAIREIK…RKLVESEEGR (147 aa)) is coil 2. The interval 388-542 (FTHVGQGVVV…SHIQTTVASS (155 aa)) is tail. In terms of domain architecture, LTD spans 420–538 (TRSSFKRHAK…IEKASHIQTT (119 aa)).

The protein belongs to the intermediate filament family. Expression is restricted to a discrete circumferential subapical layer within the intestinal terminal web (known as the 'endotube'); this layer joins directly to the apical junction complexes that connect adjacent gut cells.

The protein localises to the cytoplasm. In terms of biological role, cytoplasmic intermediate filaments provide mechanical strength to cells. Not essential protein. Component of the terminal web (organelle-depleted, intermediate filament-rich layer of cytoplasm that underlies the apical microvilli of polarized epithelial cells) in embryonic through to adult gut cells. Correct localization of filaments requires let-413. The sequence is that of Intermediate filament protein ifb-2 (ifb-2) from Caenorhabditis elegans.